We begin with the raw amino-acid sequence, 406 residues long: Acetamidase (406 aa).

Over residues 387 to 399 the composition is skewed to low complexity; the sequence is CRPRSSTSTSPRR. The interval 387–406 is disordered; the sequence is CRPRSSTSTSPRRQGPAEGR.

It belongs to the acetamidase/formamidase family.

It carries out the reaction a monocarboxylic acid amide + H2O = a monocarboxylate + NH4(+). The enzyme catalyses acetamide + H2O = acetate + NH4(+). Functionally, allows acetamide to be used as a sole carbon or nitrogen source. The sequence is that of Acetamidase (amdA) from Mycolicibacterium smegmatis (Mycobacterium smegmatis).